Here is a 381-residue protein sequence, read N- to C-terminus: Tryptophan--tRNA ligase (381 aa).

The short motif at 82-90 (PSLGMHIGH) is the 'HIGH' region element. Residues 254 to 258 (KMSSS) carry the 'KMSKS' region motif.

Belongs to the class-I aminoacyl-tRNA synthetase family.

Its subcellular location is the cytoplasm. It catalyses the reaction tRNA(Trp) + L-tryptophan + ATP = L-tryptophyl-tRNA(Trp) + AMP + diphosphate + H(+). This chain is Tryptophan--tRNA ligase, found in Sulfurisphaera tokodaii (strain DSM 16993 / JCM 10545 / NBRC 100140 / 7) (Sulfolobus tokodaii).